The chain runs to 308 residues: Aspartate carbamoyltransferase catalytic subunit (308 aa).

Carbamoyl phosphate-binding residues include Arg57 and Thr58. Lys86 contributes to the L-aspartate binding site. Residues Arg107, His135, and Gln138 each contribute to the carbamoyl phosphate site. Positions 168 and 229 each coordinate L-aspartate. Carbamoyl phosphate contacts are provided by Leu268 and Pro269.

This sequence belongs to the aspartate/ornithine carbamoyltransferase superfamily. ATCase family. As to quaternary structure, heterooligomer of catalytic and regulatory chains.

The enzyme catalyses carbamoyl phosphate + L-aspartate = N-carbamoyl-L-aspartate + phosphate + H(+). Its pathway is pyrimidine metabolism; UMP biosynthesis via de novo pathway; (S)-dihydroorotate from bicarbonate: step 2/3. Functionally, catalyzes the condensation of carbamoyl phosphate and aspartate to form carbamoyl aspartate and inorganic phosphate, the committed step in the de novo pyrimidine nucleotide biosynthesis pathway. The protein is Aspartate carbamoyltransferase catalytic subunit of Pyrococcus horikoshii (strain ATCC 700860 / DSM 12428 / JCM 9974 / NBRC 100139 / OT-3).